The sequence spans 93 residues: RNA-binding protein Hfq (93 aa).

The 61-residue stretch at 11-71 (DVFLNHVRKS…ISTVMPGAPI (61 aa)) folds into the Sm domain.

The protein belongs to the Hfq family. As to quaternary structure, homohexamer.

In terms of biological role, RNA chaperone that binds small regulatory RNA (sRNAs) and mRNAs to facilitate mRNA translational regulation in response to envelope stress, environmental stress and changes in metabolite concentrations. Also binds with high specificity to tRNAs. The protein is RNA-binding protein Hfq of Granulibacter bethesdensis (strain ATCC BAA-1260 / CGDNIH1).